The primary structure comprises 525 residues: Putative ribose/galactose/methyl galactoside import ATP-binding protein (525 aa).

The tract at residues 1–20 (MSGSATASPPAKPDLPSSDG) is disordered. ABC transporter domains are found at residues 33 to 269 (LEIS…VGRE) and 279 to 523 (KPAG…SGHR). An ATP-binding site is contributed by 65 to 72 (GENGAGKS).

The protein belongs to the ABC transporter superfamily. Carbohydrate importer 2 (CUT2) (TC 3.A.1.2) family.

It is found in the cell inner membrane. It catalyses the reaction D-ribose(out) + ATP + H2O = D-ribose(in) + ADP + phosphate + H(+). The catalysed reaction is D-galactose(out) + ATP + H2O = D-galactose(in) + ADP + phosphate + H(+). Its function is as follows. Part of an ABC transporter complex involved in carbohydrate import. Could be involved in ribose, galactose and/or methyl galactoside import. Responsible for energy coupling to the transport system. The protein is Putative ribose/galactose/methyl galactoside import ATP-binding protein of Pseudomonas syringae pv. tomato (strain ATCC BAA-871 / DC3000).